Consider the following 693-residue polypeptide: Polyribonucleotide nucleotidyltransferase (693 aa).

Mg(2+) contacts are provided by Asp485 and Asp491. The KH domain occupies 552 to 611; sequence PRIETMQINTSKIATVIGPGGKQIRQIIERSGAQVDINDNGLINISANTQESIDKAKELI. The S1 motif domain maps to 621–689; that stretch reads GKIYNGRVTS…EKGQLKLSHK (69 aa).

The protein belongs to the polyribonucleotide nucleotidyltransferase family. Mg(2+) serves as cofactor.

The protein resides in the cytoplasm. The catalysed reaction is RNA(n+1) + phosphate = RNA(n) + a ribonucleoside 5'-diphosphate. In terms of biological role, involved in mRNA degradation. Catalyzes the phosphorolysis of single-stranded polyribonucleotides processively in the 3'- to 5'-direction. This is Polyribonucleotide nucleotidyltransferase from Chlamydia muridarum (strain MoPn / Nigg).